The following is a 307-amino-acid chain: UDP-3-O-acyl-N-acetylglucosamine deacetylase (307 aa).

The Zn(2+) site is built by His80, His239, and Asp243. His266 functions as the Proton donor in the catalytic mechanism.

The protein belongs to the LpxC family. The cofactor is Zn(2+).

It carries out the reaction a UDP-3-O-[(3R)-3-hydroxyacyl]-N-acetyl-alpha-D-glucosamine + H2O = a UDP-3-O-[(3R)-3-hydroxyacyl]-alpha-D-glucosamine + acetate. It functions in the pathway glycolipid biosynthesis; lipid IV(A) biosynthesis; lipid IV(A) from (3R)-3-hydroxytetradecanoyl-[acyl-carrier-protein] and UDP-N-acetyl-alpha-D-glucosamine: step 2/6. In terms of biological role, catalyzes the hydrolysis of UDP-3-O-myristoyl-N-acetylglucosamine to form UDP-3-O-myristoylglucosamine and acetate, the committed step in lipid A biosynthesis. In Neisseria meningitidis serogroup A / serotype 4A (strain DSM 15465 / Z2491), this protein is UDP-3-O-acyl-N-acetylglucosamine deacetylase.